A 297-amino-acid chain; its full sequence is T-cell leukemia homeobox protein 1 (297 aa).

Residues 153–174 form a disordered region; the sequence is DRFTGHPYQNRTPPKKKKPRTS. The homeobox DNA-binding region spans 168–227; sequence KKKPRTSFTRLQICELEKRFHRQKYLASAERAALAKALKMTDAQVKTWFQNRRTKWRRQT.

It is found in the nucleus. Seems to be involved in the development of cranial sensory innervation from peripheral ganglia. This chain is T-cell leukemia homeobox protein 1 (TLX1), found in Gallus gallus (Chicken).